A 156-amino-acid chain; its full sequence is Small ribosomal subunit protein uS7 (156 aa).

Belongs to the universal ribosomal protein uS7 family. As to quaternary structure, part of the 30S ribosomal subunit. Contacts proteins S9 and S11.

One of the primary rRNA binding proteins, it binds directly to 16S rRNA where it nucleates assembly of the head domain of the 30S subunit. Is located at the subunit interface close to the decoding center, probably blocks exit of the E-site tRNA. This is Small ribosomal subunit protein uS7 from Clostridium botulinum (strain 657 / Type Ba4).